The primary structure comprises 702 residues: Mesothelin-like protein (702 aa).

Positions 1–35 (MAAAVTIPGPRIGALQSSGLTLLLSLAAHCSGPQA) are cleaved as a signal peptide. At 36–638 (KVLSPGGLDA…AQASTSGSLW (603 aa)) the chain is on the extracellular side. 3 N-linked (GlcNAc...) asparagine glycosylation sites follow: asparagine 122, asparagine 307, and asparagine 424. The disordered stretch occupies residues 588-611 (QLGLDASPTSPTGPAHGTRGPPST). A helical transmembrane segment spans residues 639–668 (APLGYLPLAMALPCSLLCLLHWGTCILVSV). Residues 669–702 (DSVASGWLGSQGSGAGKTEVLDSAGRPLGLTGQL) are Cytoplasmic-facing.

It belongs to the mesothelin family.

Its subcellular location is the membrane. May play a role in cellular adhesion. In Homo sapiens (Human), this protein is Mesothelin-like protein (MSLNL).